The sequence spans 252 residues: tRNA (guanine-N(1)-)-methyltransferase (252 aa).

S-adenosyl-L-methionine contacts are provided by residues glycine 118 and 138–143 (IGDYVL).

The protein belongs to the RNA methyltransferase TrmD family. As to quaternary structure, homodimer.

Its subcellular location is the cytoplasm. The enzyme catalyses guanosine(37) in tRNA + S-adenosyl-L-methionine = N(1)-methylguanosine(37) in tRNA + S-adenosyl-L-homocysteine + H(+). In terms of biological role, specifically methylates guanosine-37 in various tRNAs. In Pseudomonas aeruginosa (strain UCBPP-PA14), this protein is tRNA (guanine-N(1)-)-methyltransferase.